We begin with the raw amino-acid sequence, 463 residues long: Metalloprotease slr0863 (463 aa).

This sequence belongs to the peptidase U62 family.

Functionally, probable metalloprotease. In Synechocystis sp. (strain ATCC 27184 / PCC 6803 / Kazusa), this protein is Metalloprotease slr0863.